The following is a 274-amino-acid chain: NH(3)-dependent NAD(+) synthetase (274 aa).

Residue 46–53 (GISGGQDS) coordinates ATP. Asp-52 contributes to the Mg(2+) binding site. Position 140 (Arg-140) interacts with deamido-NAD(+). An ATP-binding site is contributed by Thr-160. Glu-165 is a Mg(2+) binding site. Residues Lys-173 and Asp-180 each contribute to the deamido-NAD(+) site. Lys-189 and Thr-211 together coordinate ATP. Deamido-NAD(+) is bound at residue 260-261 (HK).

The protein belongs to the NAD synthetase family. As to quaternary structure, homodimer.

The enzyme catalyses deamido-NAD(+) + NH4(+) + ATP = AMP + diphosphate + NAD(+) + H(+). Its pathway is cofactor biosynthesis; NAD(+) biosynthesis; NAD(+) from deamido-NAD(+) (ammonia route): step 1/1. Catalyzes the ATP-dependent amidation of deamido-NAD to form NAD. Uses ammonia as a nitrogen source. The polypeptide is NH(3)-dependent NAD(+) synthetase (Nocardia farcinica (strain IFM 10152)).